Here is a 129-residue protein sequence, read N- to C-terminus: M-zodatoxin-Lt8h (129 aa).

The N-terminal stretch at 1-20 (MKYFVVALALVAAFACIAES) is a signal peptide. Positions 21–60 (KPAESEHELAEVEEENELADLEDAVWLEDLADLSDLEETR) are excised as a propeptide.

This sequence belongs to the cationic peptide 06 (cytoinsectotoxin) family. Expressed by the venom gland.

The protein resides in the secreted. Functionally, insecticidal, cytolytic and antimicrobial peptide. Has insecticidal activity against the flesh fly S.carnaria. Has antibacterial activity against the Gram-negative bacteria E.coli. Forms voltage-dependent, ion-permeable channels in membranes. At high concentration causes cell membrane lysis. The chain is M-zodatoxin-Lt8h (cit 1-11) from Lachesana tarabaevi (Spider).